The following is a 432-amino-acid chain: N-acylneuraminate cytidylyltransferase (432 aa).

Residues Arg-39, Asn-49, Arg-98, Ser-107, Ser-109, and Gln-130 each coordinate substrate. The active site involves Arg-188.

Belongs to the CMP-NeuNAc synthase family. In terms of assembly, homotetramer; the active enzyme is formed by a dimer of dimers. As to expression, expressed in testis, ovary and liver.

The protein localises to the nucleus. The enzyme catalyses an N-acylneuraminate + CTP = a CMP-N-acyl-beta-neuraminate + diphosphate. It participates in amino-sugar metabolism; N-acetylneuraminate metabolism. In terms of biological role, catalyzes the activation of N-acetylneuraminic acid (NeuNAc) to cytidine 5'-monophosphate N-acetylneuraminic acid (CMP-NeuNAc), a substrate required for the addition of sialic acid. The protein is N-acylneuraminate cytidylyltransferase (cmas) of Oncorhynchus mykiss (Rainbow trout).